The chain runs to 302 residues: Calpain-1 catalytic subunit (302 aa).

A domain III region spans residues 1–114 (RESGCSFVLA…KRAGTQELDD (114 aa)). The interval 115–130 (QIQANLPDEQVLSAEE) is linker. Residues 131-301 (IDENFKALFR…LFKWLQLTMF (171 aa)) are domain IV. EF-hand domains follow at residues 173-206 (FSME…NRIR), 203-238 (NRIR…AGFK), and 268-302 (VRLE…TMFA). Ca(2+)-binding residues include aspartate 186, aspartate 188, asparagine 190, lysine 192, glutamate 197, aspartate 216, aspartate 218, serine 220, serine 222, and glutamate 227.

It belongs to the peptidase C2 family. Forms a heterodimer with a small (regulatory) subunit CAPNS1. The cofactor is Ca(2+). In terms of processing, the N-terminus is blocked. Undergoes calcium-induced successive autoproteolytic cleavages that generate a membrane-bound 78 kDa active form and an intracellular 75 kDa active form. Calpastatin reduces with high efficiency the transition from 78 kDa to 75 kDa calpain forms. In terms of tissue distribution, ubiquitous.

The protein localises to the cytoplasm. It is found in the cell membrane. The catalysed reaction is Broad endopeptidase specificity.. Activated by micromolar concentrations of calcium and inhibited by calpastatin. In terms of biological role, calcium-regulated non-lysosomal thiol-protease which catalyzes limited proteolysis of substrates involved in cytoskeletal remodeling and signal transduction. Proteolytically cleaves CTBP1. Cleaves and activates caspase-7 (CASP7). The polypeptide is Calpain-1 catalytic subunit (Oryctolagus cuniculus (Rabbit)).